The primary structure comprises 524 residues: Cytochrome P450 4F11 (524 aa).

Residues 15-37 (AASPWLLLLLVGGSWLLARVLAW) form a helical membrane-spanning segment. A 4-hydroxynonenal-conjugated cysteine mark is found at C45 and C260. 4-hydroxynonenal-conjugated histidine is present on H261. A heme-binding site is contributed by E328. 4-hydroxynonenal-conjugated histidine is present on H347. Residue C354 is modified to 4-hydroxynonenal-conjugated cysteine. Position 451 is a 4-hydroxynonenal-conjugated lysine (K451). Heme is bound at residue C468.

It belongs to the cytochrome P450 family. It depends on heme as a cofactor. In terms of processing, 4-hydroxynonenal conjugation impairs substrate binding and the long-chain fatty acid omega-monooxygenase activity. In terms of tissue distribution, expressed mainly in human liver, followed by kidney, heart, and skeletal muscle.

It is found in the endoplasmic reticulum membrane. Its subcellular location is the microsome membrane. The catalysed reaction is an organic molecule + reduced [NADPH--hemoprotein reductase] + O2 = an alcohol + oxidized [NADPH--hemoprotein reductase] + H2O + H(+). The enzyme catalyses an omega-methyl-long-chain fatty acid + reduced [NADPH--hemoprotein reductase] + O2 = an omega-hydroxy-long-chain fatty acid + oxidized [NADPH--hemoprotein reductase] + H2O + H(+). It catalyses the reaction dodecanoate + reduced [NADPH--hemoprotein reductase] + O2 = 12-hydroxydodecanoate + oxidized [NADPH--hemoprotein reductase] + H2O + H(+). It carries out the reaction hexadecanoate + reduced [NADPH--hemoprotein reductase] + O2 = 16-hydroxyhexadecanoate + oxidized [NADPH--hemoprotein reductase] + H2O + H(+). The catalysed reaction is (9Z)-octadecenoate + reduced [NADPH--hemoprotein reductase] + O2 = 18-hydroxy-(9Z)-octadecenoate + oxidized [NADPH--hemoprotein reductase] + H2O + H(+). The enzyme catalyses (5Z,8Z,11Z,14Z)-eicosatetraenoate + reduced [NADPH--hemoprotein reductase] + O2 = 20-hydroxy-(5Z,8Z,11Z,14Z)-eicosatetraenoate + oxidized [NADPH--hemoprotein reductase] + H2O + H(+). It catalyses the reaction (4Z,7Z,10Z,13Z,16Z,19Z)-docosahexaenoate + reduced [NADPH--hemoprotein reductase] + O2 = 22-hydroxy-(4Z,7Z,10Z,13Z,16Z,19Z)-docosahexaenoate + oxidized [NADPH--hemoprotein reductase] + H2O + H(+). It carries out the reaction 8-hydroxy-(5Z,9E,11Z,14Z)-eicosatetraenoate + reduced [NADPH--hemoprotein reductase] + O2 = 8,20-dihydroxy-(5Z,9E,11Z,14Z)-eicosatetraenoate + oxidized [NADPH--hemoprotein reductase] + H2O + H(+). The catalysed reaction is 3-hydroxyhexadecanoate + reduced [NADPH--hemoprotein reductase] + O2 = 3,16-dihydroxyhexadecanoate + oxidized [NADPH--hemoprotein reductase] + H2O + H(+). The enzyme catalyses 3-hydroxyoctadecanoate + reduced [NADPH--hemoprotein reductase] + O2 = 3,18-dihydroxyoctadecanoate + oxidized [NADPH--hemoprotein reductase] + H2O + H(+). It catalyses the reaction phylloquinone + reduced [NADPH--hemoprotein reductase] + O2 = omega-hydroxyphylloquinone + oxidized [NADPH--hemoprotein reductase] + H2O + H(+). It carries out the reaction menaquinone-4 + reduced [NADPH--hemoprotein reductase] + O2 = omega-hydroxymenaquinone-4 + oxidized [NADPH--hemoprotein reductase] + H2O + H(+). The catalysed reaction is 2-hexyl-5-pentylresorcinol + reduced [NADPH--hemoprotein reductase] + O2 = 2-hexyl-5-(5-hydroxypentyl)resorcinol + oxidized [NADPH--hemoprotein reductase] + H2O + H(+). The enzyme catalyses 2-hexyl-5-heptylresorcinol + reduced [NADPH--hemoprotein reductase] + O2 = 2-hexyl-5-(7-hydroxyheptyl)resorcinol + oxidized [NADPH--hemoprotein reductase] + H2O + H(+). It catalyses the reaction 12-hydroxy-(5Z,8Z,10E,14Z)-eicosatetraenoate + reduced [NADPH--hemoprotein reductase] + O2 = 12,20-dihydroxy-(5Z,8Z,10E,14Z)-eicosatetraenoate + oxidized [NADPH--hemoprotein reductase] + H2O + H(+). It carries out the reaction 15-hydroxy-(5Z,8Z,11Z,13E)-eicosatetraenoate + reduced [NADPH--hemoprotein reductase] + O2 = 15,20-dihydroxy-(5Z,8Z,11Z,13E)-eicosatetraenoate + oxidized [NADPH--hemoprotein reductase] + H2O + H(+). It functions in the pathway lipid metabolism; arachidonate metabolism. Its pathway is lipid metabolism; oxylipin biosynthesis. The protein operates within cofactor degradation; phylloquinone degradation. It participates in xenobiotic degradation. Inhibition of the long-chain fatty acid omega-monooxygenase activity by 4-hydroxynonenal (4-HNE) conjugation. Functionally, a cytochrome P450 monooxygenase involved in the metabolism of various endogenous substrates, including fatty acids and their oxygenated derivatives (oxylipins). Mechanistically, uses molecular oxygen inserting one oxygen atom into a substrate, and reducing the second into a water molecule, with two electrons provided by NADPH via cytochrome P450 reductase (CPR; NADPH-ferrihemoprotein reductase). Catalyzes with high efficiency the oxidation of the terminal carbon (omega-oxidation) of 3-hydroxy fatty acids, such as 3-hydroxyhexadecanoic and 3-hydroxyoctadecanoic acids, likely participating in the biosynthesis of long-chain 3-hydroxydicarboxylic acids. Omega-hydroxylates and inactivates phylloquinone (vitamin K1), and menaquinone-4 (MK-4, a form of vitamin K2), both acting as cofactors in blood coagulation. Metabolizes with low efficiciency fatty acids, including (5Z,8Z,11Z,14Z)-eicosatetraenoic acid (arachidonate) and its oxygenated metabolite 8-hydroxyeicosatetraenoic acid (8-HETE). Catalyzes N- and O-demethylation of drugs such as erythromycin, benzphetamine, ethylmorphine, chlorpromazine, imipramine and verapamil. Catalyzes the oxidation of dialkylresorcinol 2. The polypeptide is Cytochrome P450 4F11 (Homo sapiens (Human)).